The following is a 330-amino-acid chain: Thiosulfate transporter TsuA (330 aa).

The Periplasmic segment spans residues 1–2 (MI). Residues 3–18 (WTGLLVGFLFGIVLQR) form a helical membrane-spanning segment. The Cytoplasmic segment spans residues 19 to 36 (GRICFNSAFRDVLLFKDN). Residues 37 to 59 (YLFKLAVFTLALEMILFVLLSQV) form a helical membrane-spanning segment. Residues 60-70 (GLMQMNPKPLN) lie on the Periplasmic side of the membrane. The chain crosses the membrane as a helical span at residues 71–87 (LVGNIIGGFVFGLGMVL). The Cytoplasmic portion of the chain corresponds to 88–102 (AGGCASGVTYRVGEG). A helical transmembrane segment spans residues 103 to 121 (LTTAWFAALFYGLGAYATK). The Periplasmic portion of the chain corresponds to 122 to 162 (SGAFSWWLSWVGQFKSPLSVEESAYYVKGAGPTISSVLGLN). The chain crosses the membrane as a helical span at residues 163-180 (PWIPALVIAALFILWAFG). At 181 to 189 (TKTTSRETK) the chain is on the cytoplasmic side. Residues 190–211 (FNWKIASVCLALVAGLGFITST) form a helical membrane-spanning segment. The Periplasmic portion of the chain corresponds to 212–239 (LSGRKYGLGITGGWINLFQGFLTNSPLN). Residues 240–258 (WEGLEIVGIILGAGVAAAV) traverse the membrane as a helical segment. Over 259–269 (AGEFKLRMPKN) the chain is Cytoplasmic. Residues 270 to 289 (PVTYLQVGIGGLLMGIGAVT) form a helical membrane-spanning segment. Residues 290 to 306 (AGGCNIGHFLTGVPQLA) lie on the Periplasmic side of the membrane. Residues 307-326 (LSSWLASIFFILGNWTMAWI) traverse the membrane as a helical segment. Topologically, residues 327–330 (LFRR) are cytoplasmic.

This sequence belongs to the TsuA/YedE (TC 9.B.102) family.

It is found in the cell inner membrane. It catalyses the reaction thiosulfate(in) = thiosulfate(out). Functionally, mediates thiosulfate uptake. The chain is Thiosulfate transporter TsuA from Spirochaeta thermophila (strain ATCC 700085 / DSM 6578 / Z-1203).